The sequence spans 180 residues: Probable cobalt-precorrin-6B C(15)-methyltransferase (decarboxylating) (180 aa).

Residues threonine 16, 40 to 44 (GCGSG), aspartate 61, and alanine 89 contribute to the S-adenosyl-L-methionine site.

The protein belongs to the methyltransferase superfamily. Archaeal-type CbiT family.

It catalyses the reaction Co-precorrin-6B + S-adenosyl-L-methionine = Co-precorrin-7 + S-adenosyl-L-homocysteine + CO2. Its pathway is cofactor biosynthesis; adenosylcobalamin biosynthesis; cob(II)yrinate a,c-diamide from sirohydrochlorin (anaerobic route): step 8/10. Functionally, catalyzes the methylation of C-15 in cobalt-precorrin-6B followed by the decarboxylation of C-12 to form cobalt-precorrin-7. This is Probable cobalt-precorrin-6B C(15)-methyltransferase (decarboxylating) from Methanococcus vannielii (strain ATCC 35089 / DSM 1224 / JCM 13029 / OCM 148 / SB).